A 311-amino-acid chain; its full sequence is Putative dihydroorotate dehydrogenase A (fumarate) (311 aa).

Substrate contacts are provided by residues Lys45, 69–73 (NSMGL), and Asn128. Residue 45-46 (KT) participates in FMN binding. Residue Asn128 coordinates FMN. The active-site Nucleophile is Cys131. Lys165 and Val193 together coordinate FMN. 194 to 195 (NS) contributes to the substrate binding site. Residues Gly220, 248-249 (GG), and 270-271 (GT) each bind FMN.

Belongs to the dihydroorotate dehydrogenase family. Type 1 subfamily. Homodimer. FMN serves as cofactor.

Its subcellular location is the cytoplasm. It catalyses the reaction (S)-dihydroorotate + fumarate = orotate + succinate. The protein operates within pyrimidine metabolism; UMP biosynthesis via de novo pathway. In terms of biological role, catalyzes the conversion of dihydroorotate to orotate with fumarate as the electron acceptor. This chain is Putative dihydroorotate dehydrogenase A (fumarate) (pyrD), found in Streptococcus uberis (strain ATCC BAA-854 / 0140J).